Reading from the N-terminus, the 1538-residue chain is Phenolphthiocerol/phthiocerol polyketide synthase subunit B (1538 aa).

The region spanning alanine 33–glutamine 455 is the Ketosynthase family 3 (KS3) domain. Residues cysteine 205, histidine 340, and histidine 377 each act as for beta-ketoacyl synthase activity in the active site. Residues aspartate 553–histidine 882 form an acyltransferase region. The For malonyltransferase activity role is filled by serine 649. Position 1153 to 1196 (serine 1153 to leucine 1196) interacts with NADP(+). Positions serine 1153–serine 1328 are beta-ketoacyl reductase. The Carrier domain occupies aspartate 1423 to leucine 1498. Serine 1458 bears the O-(pantetheine 4'-phosphoryl)serine mark.

The cofactor is NADP(+). Pantetheine 4'-phosphate serves as cofactor.

The enzyme catalyses icosanoyl-[(phenol)carboxyphthiodiolenone synthase] + 2 (S)-methylmalonyl-CoA + 3 malonyl-CoA + 5 NADPH + 10 H(+) = C32-carboxyphthiodiolenone-[(phenol)carboxyphthiodiolenone synthase] + 5 CO2 + 5 NADP(+) + 5 CoA + 2 H2O. It catalyses the reaction docosanoyl-[(phenol)carboxyphthiodiolenone synthase] + 2 (S)-methylmalonyl-CoA + 3 malonyl-CoA + 5 NADPH + 10 H(+) = C34-carboxyphthiodiolenone-[(phenol)carboxyphthiodiolenone synthase] + 5 CO2 + 5 NADP(+) + 5 CoA + 2 H2O. It carries out the reaction 17-(4-hydroxyphenyl)heptadecanoyl-[(phenol)carboxyphthiodiolenone synthase] + 2 (S)-methylmalonyl-CoA + 3 malonyl-CoA + 5 NADPH + 10 H(+) = C35-(phenol)carboxyphthiodiolenone-[(phenol)carboxyphthiodiolenone synthase] + 5 CO2 + 5 NADP(+) + 5 CoA + 2 H2O. The catalysed reaction is 19-(4-hydroxyphenyl)nonadecanoyl-[(phenol)carboxyphthiodiolenone synthase] + 2 (S)-methylmalonyl-CoA + 3 malonyl-CoA + 5 NADPH + 10 H(+) = C37-(phenol)carboxyphthiodiolenone-[(phenol)carboxyphthiodiolenone synthase] + 5 CO2 + 5 NADP(+) + 5 CoA + 2 H2O. Its pathway is lipid metabolism; fatty acid biosynthesis. In terms of biological role, part of the PpsABCDE complex involved in the biosynthesis of the lipid core common to phthiocerols and phenolphthiocerols by successive additions of malonyl-CoA or methylmalonyl-CoA extender units. PpsA can accept as substrate the activated forms of either icosanoyl (C20), docosanoyl (C22) or lignoceroyl (C24) groups from FadD26, or a (4-hydroxyphenyl)-C17 or (4-hydroxyphenyl)-C19 fatty acyl from FadD29. PpsA initiates the biosynthesis and extends its substrate using a malonyl-CoA extender unit. The PpsB and PpsC proteins add the second and third malonyl-CoA extender units. PpsD adds an (R)-methylmalonyl unit and PpsE adds a second (R)-methylmalonyl unit. The incorporation of the methylmalonyl units results in formation of two branched methyl groups in the elongated product. This is Phenolphthiocerol/phthiocerol polyketide synthase subunit B (ppsB) from Mycobacterium tuberculosis (strain CDC 1551 / Oshkosh).